A 450-amino-acid polypeptide reads, in one-letter code: uncharacterized protein (450 aa).

The segment covering W141–S151 has biased composition (basic and acidic residues). Disordered regions lie at residues W141–G171, L276–Q298, and D395–N416. Residues E152–G171 show a composition bias toward polar residues. Basic and acidic residues predominate over residues Q283 to Q298. Residues D395–S411 are compositionally biased toward acidic residues.

This is an uncharacterized protein from Saccharomyces cerevisiae (strain ATCC 204508 / S288c) (Baker's yeast).